The chain runs to 608 residues: Microtubule-associated protein 70-3 (608 aa).

Residues 1-23 (MADGVEEGNAVAPRGPARRRGTV) are disordered. A coiled-coil region spans residues 40-346 (DPVRVELTRL…ARSEAQLKEK (307 aa)). The segment at 224 to 458 (ILDKLQRQKV…HLLNRSTDAV (235 aa)) is required for targeting to microtubules. Disordered stretches follow at residues 354-493 (LEDG…TANN) and 570-608 (DKEQEVKARRLGSSKGTGSSQVLSGSRSSSRSGLTRNYQ). The segment covering 363–379 (SGSSRLPTEGKSFSNGP) has biased composition (polar residues). A compositionally biased stretch (low complexity) spans 402 to 421 (RRSPSFHSRSSLSSSSSLVL). Positions 476-493 (IENTNSNTDESNKETANN) are enriched in polar residues. The stretch at 542-576 (LTKAMEVEAKKMRREVAAMEKEVAAMRVDKEQEVK) forms a coiled coil. Positions 586 to 608 (TGSSQVLSGSRSSSRSGLTRNYQ) are enriched in low complexity.

The protein belongs to the MAP70 family.

Its subcellular location is the cytoplasm. The protein resides in the cytoskeleton. In terms of biological role, plant-specific protein that interact with microtubules. The sequence is that of Microtubule-associated protein 70-3 (MAP70.3) from Oryza sativa subsp. japonica (Rice).